The chain runs to 364 residues: Protein trichome birefringence-like 40 (364 aa).

The helical; Signal-anchor for type II membrane protein transmembrane segment at 9–25 (LASLSLILFSSFPGLLA) threads the bilayer. The GDS motif signature appears at 118–120 (GDS). Positions 341 to 355 (DCSHWCLPGLPDTWN) match the DCXHWCLPGXXDXWN motif motif.

The protein belongs to the PC-esterase family. TBL subfamily.

The protein localises to the membrane. Its function is as follows. May act as a bridging protein that binds pectin and other cell wall polysaccharides. Probably involved in maintaining esterification of pectins. May be involved in the specific O-acetylation of cell wall polymers. The protein is Protein trichome birefringence-like 40 (TBL40) of Arabidopsis thaliana (Mouse-ear cress).